The primary structure comprises 371 residues: Flagellar P-ring protein (371 aa).

The N-terminal stretch at 1–25 (MTMRVCKWLLTFALLFAATLTPAHS) is a signal peptide.

The protein belongs to the FlgI family. As to quaternary structure, the basal body constitutes a major portion of the flagellar organelle and consists of four rings (L,P,S, and M) mounted on a central rod.

It localises to the periplasm. It is found in the bacterial flagellum basal body. Assembles around the rod to form the L-ring and probably protects the motor/basal body from shearing forces during rotation. The protein is Flagellar P-ring protein of Sinorhizobium fredii (strain NBRC 101917 / NGR234).